The sequence spans 732 residues: B-cadherin (732 aa).

The propeptide occupies 1–6 (LRRQKR). Cadherin domains follow at residues 6–114 (RDWV…KPQF), 115–227 (TQEV…APEF), 228–339 (DPKT…APVF), 340–443 (DPPL…VNDH), and 444–554 (GPEP…RVDT). At 6–554 (RDWVIPPIKV…SCAQKPRVDT (549 aa)) the chain is on the extracellular side. The N-linked (GlcNAc...) asparagine glycan is linked to asparagine 137. An N-linked (GlcNAc...) asparagine glycan is attached at asparagine 410. Residues 555-580 (GVPIVLAVLGAVLALLLVLLLLLLLV) form a helical membrane-spanning segment. Residues 581 to 732 (RRRKVVKEPL…ELYGGGEDEE (152 aa)) are Cytoplasmic-facing.

As to expression, expressed in a wide variety of tissues.

Its subcellular location is the cell membrane. Its function is as follows. Cadherins are calcium-dependent cell adhesion proteins. They preferentially interact with themselves in a homophilic manner in connecting cells; cadherins may thus contribute to the sorting of heterogeneous cell types. B-cadherin may have important functions in neurogenesis, in at least some epithelia, and in embryogenesis. This is B-cadherin (K-CAM) from Gallus gallus (Chicken).